The primary structure comprises 147 residues: Large ribosomal subunit protein bL9 (147 aa).

Belongs to the bacterial ribosomal protein bL9 family.

Functionally, binds to the 23S rRNA. In Campylobacter jejuni subsp. doylei (strain ATCC BAA-1458 / RM4099 / 269.97), this protein is Large ribosomal subunit protein bL9.